Consider the following 352-residue polypeptide: Histidinol-phosphate aminotransferase (352 aa).

Lysine 208 carries the post-translational modification N6-(pyridoxal phosphate)lysine.

The protein belongs to the class-II pyridoxal-phosphate-dependent aminotransferase family. Histidinol-phosphate aminotransferase subfamily. In terms of assembly, homodimer. Pyridoxal 5'-phosphate serves as cofactor.

The catalysed reaction is L-histidinol phosphate + 2-oxoglutarate = 3-(imidazol-4-yl)-2-oxopropyl phosphate + L-glutamate. Its pathway is amino-acid biosynthesis; L-histidine biosynthesis; L-histidine from 5-phospho-alpha-D-ribose 1-diphosphate: step 7/9. The chain is Histidinol-phosphate aminotransferase from Streptococcus sanguinis (strain SK36).